Here is a 514-residue protein sequence, read N- to C-terminus: Lysine--tRNA ligase (514 aa).

Low complexity predominate over residues 1–13 (MSKPNNQNQQNNQ). The tract at residues 1 to 21 (MSKPNNQNQQNNQEPAPEDAN) is disordered. Positions 422 and 429 each coordinate Mg(2+).

The protein belongs to the class-II aminoacyl-tRNA synthetase family. Homodimer. Mg(2+) is required as a cofactor.

The protein resides in the cytoplasm. It catalyses the reaction tRNA(Lys) + L-lysine + ATP = L-lysyl-tRNA(Lys) + AMP + diphosphate. In Psychrobacter cryohalolentis (strain ATCC BAA-1226 / DSM 17306 / VKM B-2378 / K5), this protein is Lysine--tRNA ligase.